The following is a 280-amino-acid chain: Urease accessory protein UreD 1 (280 aa).

The protein belongs to the UreD family. In terms of assembly, ureD, UreF and UreG form a complex that acts as a GTP-hydrolysis-dependent molecular chaperone, activating the urease apoprotein by helping to assemble the nickel containing metallocenter of UreC. The UreE protein probably delivers the nickel.

The protein localises to the cytoplasm. Required for maturation of urease via the functional incorporation of the urease nickel metallocenter. This is Urease accessory protein UreD 1 from Brucella melitensis biotype 1 (strain ATCC 23456 / CCUG 17765 / NCTC 10094 / 16M).